A 202-amino-acid polypeptide reads, in one-letter code: Outer-membrane lipoprotein carrier protein (202 aa).

The signal sequence occupies residues 1–18 (MNKLFLILLLIFSHEVFS).

Belongs to the LolA family. In terms of assembly, monomer.

It is found in the periplasm. In terms of biological role, participates in the translocation of lipoproteins from the inner membrane to the outer membrane. Only forms a complex with a lipoprotein if the residue after the N-terminal Cys is not an aspartate (The Asp acts as a targeting signal to indicate that the lipoprotein should stay in the inner membrane). This chain is Outer-membrane lipoprotein carrier protein, found in Legionella pneumophila (strain Paris).